Consider the following 533-residue polypeptide: Calcium-dependent protein kinase 8 (533 aa).

The interval 1 to 21 (MGNCCASPGSETGSKKGKPKI) is disordered. The N-myristoyl glycine moiety is linked to residue glycine 2. The Protein kinase domain maps to 57 to 315 (YDLGREVGRG…AAQVLEHSWI (259 aa)). ATP contacts are provided by residues 63–71 (VGRGEFGIT) and lysine 86. The active-site Proton acceptor is aspartate 181. Serine 221 bears the Phosphoserine mark. An autoinhibitory domain region spans residues 321-351 (APNVSLGETVKARLKQFSVMNKLKKRALRVI). EF-hand domains follow at residues 358 to 394 (EEVA…GQQQ), 395 to 430 (IPDT…LKKM), 431 to 466 (ANDE…EVDT), and 467 to 502 (NSEE…GTDW). Ca(2+)-binding residues include aspartate 371, threonine 375, lysine 377, glutamate 382, aspartate 408, aspartate 410, aspartate 412, threonine 414, glutamate 419, aspartate 444, asparagine 446, serine 448, tyrosine 450, glutamate 455, aspartate 480, aspartate 482, aspartate 484, and arginine 486. Phosphoserine is present on serine 488. A Ca(2+)-binding site is contributed by glutamate 491. At serine 526 the chain carries Phosphoserine.

It belongs to the protein kinase superfamily. Ser/Thr protein kinase family. CDPK subfamily.

The protein resides in the cell membrane. The catalysed reaction is L-seryl-[protein] + ATP = O-phospho-L-seryl-[protein] + ADP + H(+). It catalyses the reaction L-threonyl-[protein] + ATP = O-phospho-L-threonyl-[protein] + ADP + H(+). With respect to regulation, activated by calcium. Autophosphorylation may play an important role in the regulation of the kinase activity. Functionally, may play a role in signal transduction pathways that involve calcium as a second messenger. This is Calcium-dependent protein kinase 8 (CPK8) from Arabidopsis thaliana (Mouse-ear cress).